Reading from the N-terminus, the 214-residue chain is Ras-related protein RABA2b (214 aa).

19–26 (GDSGVGKS) is a binding site for GTP. An Effector region motif is present at residues 41-49 (SKSTIGVEF). GTP-binding positions include 67–71 (DTAGQ), 125–128 (NKSD), and 155–156 (SA). Residues Cys211 and Cys212 are each lipidated (S-geranylgeranyl cysteine).

It belongs to the small GTPase superfamily. Rab family. In terms of tissue distribution, expressed in root tips.

Its subcellular location is the endosome membrane. The protein localises to the golgi apparatus. It localises to the trans-Golgi network membrane. Its function is as follows. Intracellular vesicle trafficking and protein transport. The polypeptide is Ras-related protein RABA2b (RABA2B) (Arabidopsis thaliana (Mouse-ear cress)).